The following is a 202-amino-acid chain: ATP-dependent Clp protease proteolytic subunit (202 aa).

Catalysis depends on serine 106, which acts as the Nucleophile. Residue histidine 131 is part of the active site.

It belongs to the peptidase S14 family. Fourteen ClpP subunits assemble into 2 heptameric rings which stack back to back to give a disk-like structure with a central cavity, resembling the structure of eukaryotic proteasomes.

It is found in the cytoplasm. The enzyme catalyses Hydrolysis of proteins to small peptides in the presence of ATP and magnesium. alpha-casein is the usual test substrate. In the absence of ATP, only oligopeptides shorter than five residues are hydrolyzed (such as succinyl-Leu-Tyr-|-NHMec, and Leu-Tyr-Leu-|-Tyr-Trp, in which cleavage of the -Tyr-|-Leu- and -Tyr-|-Trp bonds also occurs).. Functionally, cleaves peptides in various proteins in a process that requires ATP hydrolysis. Has a chymotrypsin-like activity. Plays a major role in the degradation of misfolded proteins. The polypeptide is ATP-dependent Clp protease proteolytic subunit (Variovorax paradoxus (strain S110)).